We begin with the raw amino-acid sequence, 670 residues long: MAFPVDMLENCSHEELENSAEDYMSDLRCGDPENPECFSLLNITIPISLSNVGFVPLYGGDQTQKILALFAPEDSLTAVALYLADQWWAIDDIVKTSVPSREGLKQVSTLGERVVLYVLNRIIYRKQEMERNEIPFLCHSSTDYAKILWKKGEAIGFYSVKPTGSICASFLTQSYQLPVLDTMFLRKKYRGKDFGLHMLEDFVDSFTEDALGLRYPLSSLMYTACKQYFEKYPGDHELLWEVEGVGHWYQRIPVTRALQREALKILALSQNEPKRPMSGEYGPASVPEYEARTEDNQSSEMQLTIDSLKDAFASTSEGHDKTSVSTHTRSGNLKRPKIGKRFQDSEFSSSQGEDEKTSQTSLTASINKLESTARPSESSEEFLEEEPEQRGIEFEDESSDRDARPALETQPQQEKQDGEKESELEPMNGEIMDDSLKTSLITEEEDSTSEVLDEELKLQPFNSSEDSTNLVPLVVESSKPPEVDAPDKTPRIPDSEMLMDEGTSDEKGHMEEKLSLLPRKKAHLGSSDNVATMSNEERSDGGFPNSVIAEFSEEPVSENLSPNTTSSLEDQGEEGVSEPQETSTALPQSSLIEVELEDVPFSQNAGQKNQSEEQSEASSEQLDQFTQSAEKAVDSSSEEIEVEVPVVDRRNLRRKAKGHKGPAKKKAKLT.

Disordered regions lie at residues 273 to 301 (PKRPMSGEYGPASVPEYEARTEDNQSSEM) and 314 to 670 (STSE…AKLT). Ser350 carries the post-translational modification Phosphoserine. Positions 358–375 (SQTSLTASINKLESTARP) are enriched in polar residues. Acidic residues predominate over residues 378–387 (SSEEFLEEEP). Ser379 is subject to Phosphoserine. A compositionally biased stretch (basic and acidic residues) spans 414 to 423 (EKQDGEKESE). Positions 442–453 (TEEEDSTSEVLD) are enriched in acidic residues. Ser449 is modified (phosphoserine). Polar residues predominate over residues 460 to 470 (PFNSSEDSTNL). Composition is skewed to basic and acidic residues over residues 479–494 (KPPEVDAPDKTPRIPD) and 504–514 (SDEKGHMEEKL). Phosphoserine is present on Ser515. Polar residues-rich tracts occupy residues 558–569 (ENLSPNTTSSLE) and 579–591 (PQETSTALPQSSL). Phosphoserine is present on residues Ser615, Ser618, and Ser635. Positions 651-670 (NLRRKAKGHKGPAKKKAKLT) are enriched in basic residues.

Belongs to the FAM169 family.

Its subcellular location is the nucleus envelope. It is found in the nucleus inner membrane. This chain is Soluble lamin-associated protein of 75 kDa (FAM169A), found in Homo sapiens (Human).